A 337-amino-acid polypeptide reads, in one-letter code: tRNA-dihydrouridine synthase B (337 aa).

FMN contacts are provided by residues 19-21 and Gln73; that span reads PMA. Cys103 functions as the Proton donor in the catalytic mechanism. FMN-binding positions include Lys142, 203 to 205, and 227 to 228; these read NGD and GR.

Belongs to the Dus family. DusB subfamily. FMN serves as cofactor.

It catalyses the reaction a 5,6-dihydrouridine in tRNA + NAD(+) = a uridine in tRNA + NADH + H(+). The enzyme catalyses a 5,6-dihydrouridine in tRNA + NADP(+) = a uridine in tRNA + NADPH + H(+). In terms of biological role, catalyzes the synthesis of 5,6-dihydrouridine (D), a modified base found in the D-loop of most tRNAs, via the reduction of the C5-C6 double bond in target uridines. This chain is tRNA-dihydrouridine synthase B, found in Pseudomonas putida (strain ATCC 47054 / DSM 6125 / CFBP 8728 / NCIMB 11950 / KT2440).